The following is a 1031-amino-acid chain: Serine-repeat antigen protein 6 (1031 aa).

Positions 1–24 (MICPIFFLYIINVLFTQYFIKCEG) are cleaved as a signal peptide. A glycan (N-linked (GlcNAc...) asparagine) is linked at Asn-74. Residues 91–101 (KVVSSSESGKG) are compositionally biased toward low complexity. Positions 91-163 (KVVSSSESGK…TESSSETLNK (73 aa)) are disordered. Over residues 104 to 139 (VSHTKVTSEGLSDTQPNVTQSVSSSTHTPGSLDSTM) the composition is skewed to polar residues. Residue Asn-120 is glycosylated (N-linked (GlcNAc...) asparagine). Low complexity predominate over residues 140 to 158 (STEQHSSVSQSSLPTESSS). N-linked (GlcNAc...) asparagine glycosylation occurs at Asn-449. The interval 490-567 (TLPSESPSES…GDTNYVYDFD (78 aa)) is disordered. Residues 492–505 (PSESPSESSSKSDS) show a composition bias toward low complexity. Residues 511 to 535 (NDKDKNEDKDDMSKNSKEEFKNDDK) show a composition bias toward basic and acidic residues. N-linked (GlcNAc...) asparagine glycosylation is present at Asn-544. Low complexity predominate over residues 554–564 (NINNGDTNYVY). An N-linked (GlcNAc...) asparagine glycan is attached at Asn-573. Residue Cys-644 is part of the active site. Asn-674 carries an N-linked (GlcNAc...) asparagine glycan. Residues His-810 and Asn-835 contribute to the active site. Residues Asn-929 and Asn-974 are each glycosylated (N-linked (GlcNAc...) asparagine).

The protein belongs to the peptidase C1 family. Just prior to merozoite egress from host erythrocytes, proteolytically cleaved by SUB1 to generate the active 75kDa form.

It is found in the parasitophorous vacuole lumen. Its subcellular location is the parasitophorous vacuole membrane. Its function is as follows. Cysteine protease which plays an essential role in merozoite egress from host erythrocytes. May cleave host SPTB/beta spectrin and ANK1/ankyrin-1 which disrupts host erythrocyte actin cytoskeleton and leads to host erythrocyte cell membrane rupture. In Plasmodium falciparum (isolate 3D7), this protein is Serine-repeat antigen protein 6.